Consider the following 421-residue polypeptide: MSGLPDYLRRPPRGMRDWLPPQFYALRHMEETLSKVAEAFGYRRVETPVVEHFEVLAKKAGQEVVNEIYYFKDKAGRDLGLRFDMTVPIARVISYNLSLPRPIRWYYFTKVFRYDEPQHGRYREFYQFGIELIGSASPRADAEVLQVFTQALDAVGARSYIVKINDRRVVDKLLERLGVSAYRDVIYRALDKKLKLSREEVIKLMAEGGVSLDTAERIYDIAEEMSIEEAVNVITKLDSGLGSFYNKLLKYLEAAVSLDKFRFDMSIVRGLDYYTGMVFEAFAGEYKLAVGGGGRYDDLLELYSGVKMPALGFAIGVERLMEAVGLEGVEKPLDYYIYIFDDDAYPYAVAIAKRLRSAGYSVVVELGEKNLKEVFEYILKIGTRYLIIIGKKELEKGVVKIRDLQRREEFEKPFSEFYGTT.

It belongs to the class-II aminoacyl-tRNA synthetase family.

It localises to the cytoplasm. It carries out the reaction tRNA(His) + L-histidine + ATP = L-histidyl-tRNA(His) + AMP + diphosphate + H(+). The chain is Histidine--tRNA ligase from Pyrobaculum islandicum (strain DSM 4184 / JCM 9189 / GEO3).